The sequence spans 65 residues: Large ribosomal subunit protein bL35 (65 aa).

It belongs to the bacterial ribosomal protein bL35 family.

The protein is Large ribosomal subunit protein bL35 of Alkalilimnicola ehrlichii (strain ATCC BAA-1101 / DSM 17681 / MLHE-1).